Here is a 150-residue protein sequence, read N- to C-terminus: FAD synthase (150 aa).

Residues 16-17, 21-24, and Asp102 contribute to the ATP site; these read VF and HVGH.

This sequence belongs to the archaeal FAD synthase family. In terms of assembly, homodimer. A divalent metal cation serves as cofactor.

The enzyme catalyses FMN + ATP + H(+) = FAD + diphosphate. The protein operates within cofactor biosynthesis; FAD biosynthesis; FAD from FMN: step 1/1. Catalyzes the transfer of the AMP portion of ATP to flavin mononucleotide (FMN) to produce flavin adenine dinucleotide (FAD) coenzyme. This chain is FAD synthase, found in Thermococcus onnurineus (strain NA1).